Consider the following 411-residue polypeptide: Endo-1,4-beta-xylanase A (411 aa).

The N-terminal stretch at 1–33 is a signal peptide; that stretch reads MKKFKIRKLMARVLALALVFSTFFMVSKVDANA. Positions 34–382 constitute a GH10 domain; the sequence is ASYNLMETYG…KPAYDEVVKA (349 aa). The active-site Proton donor is E201. E311 functions as the Nucleophile in the catalytic mechanism. The tract at residues 387 to 411 is disordered; the sequence is FGNPGSFTPQPTITPQPTPTPSGQT. The span at 398–411 shows a compositional bias: pro residues; sequence TITPQPTPTPSGQT.

The protein belongs to the glycosyl hydrolase 10 (cellulase F) family.

It carries out the reaction Endohydrolysis of (1-&gt;4)-beta-D-xylosidic linkages in xylans.. Its pathway is glycan degradation; xylan degradation. Its function is as follows. B.fibrisolvens is located in the rumen of ruminant animals, where it contributes to the animal's digestion of plant material by hydrolyzing hemicellulose with its xylanases. The chain is Endo-1,4-beta-xylanase A (xynA) from Butyrivibrio fibrisolvens.